The primary structure comprises 121 residues: T cell receptor alpha variable 23/delta variable 6 (121 aa).

An N-terminal signal peptide occupies residues 1–21 (MDKILGASFLVLWLQLCWVSG). In terms of domain architecture, Ig-like spans 30-121 (QQVKQSPQSL…DSATYFCAAS (92 aa)). Cys-51 and Cys-118 are joined by a disulfide. Asn-95 carries an N-linked (GlcNAc...) asparagine glycan.

In terms of assembly, alpha-beta TR is a heterodimer composed of an alpha and beta chain; disulfide-linked. The alpha-beta TR is associated with the transmembrane signaling CD3 coreceptor proteins to form the TR-CD3 (TcR or TCR). The assembly of alpha-beta TR heterodimers with CD3 occurs in the endoplasmic reticulum where a single alpha-beta TR heterodimer associates with one CD3D-CD3E heterodimer, one CD3G-CD3E heterodimer and one CD247 homodimer forming a stable octameric structure. CD3D-CD3E and CD3G-CD3E heterodimers preferentially associate with TR alpha and TR beta chains, respectively. The association of the CD247 homodimer is the last step of TcR assembly in the endoplasmic reticulum and is required for transport to the cell surface.

Its subcellular location is the cell membrane. Functionally, v region of the variable domain of T cell receptor (TR) alpha chain that participates in the antigen recognition. Alpha-beta T cell receptors are antigen specific receptors which are essential to the immune response and are present on the cell surface of T lymphocytes. Recognize peptide-major histocompatibility (MH) (pMH) complexes that are displayed by antigen presenting cells (APC), a prerequisite for efficient T cell adaptive immunity against pathogens. Binding of alpha-beta TR to pMH complex initiates TR-CD3 clustering on the cell surface and intracellular activation of LCK that phosphorylates the ITAM motifs of CD3G, CD3D, CD3E and CD247 enabling the recruitment of ZAP70. In turn ZAP70 phosphorylates LAT, which recruits numerous signaling molecules to form the LAT signalosome. The LAT signalosome propagates signal branching to three major signaling pathways, the calcium, the mitogen-activated protein kinase (MAPK) kinase and the nuclear factor NF-kappa-B (NF-kB) pathways, leading to the mobilization of transcription factors that are critical for gene expression and essential for T cell growth and differentiation. The T cell repertoire is generated in the thymus, by V-(D)-J rearrangement. This repertoire is then shaped by intrathymic selection events to generate a peripheral T cell pool of self-MH restricted, non-autoaggressive T cells. Post-thymic interaction of alpha-beta TR with the pMH complexes shapes TR structural and functional avidity. The polypeptide is T cell receptor alpha variable 23/delta variable 6 (Homo sapiens (Human)).